Here is a 560-residue protein sequence, read N- to C-terminus: Exonuclease subunit 2 (560 aa).

ATP is bound at residue Gly-36–Ser-43.

It to phage T5 protein D13 and to yeast RAD52. As to quaternary structure, consists of two subunits: gp46 and gp47.

In terms of biological role, exonuclease that plays a role in viral genome replication, DNA recombination, and host DNA degradation. The chain is Exonuclease subunit 2 (46) from Enterobacteria phage T4 (Bacteriophage T4).